Consider the following 357-residue polypeptide: Protein-glutamate methylesterase/protein-glutamine glutaminase 5 (357 aa).

Positions 10 to 127 (RVLVVDDSSF…IDAQKAFKEE (118 aa)) constitute a Response regulatory domain. The residue at position 61 (aspartate 61) is a 4-aspartylphosphate. The region spanning 161–357 (PRPAGQRYQY…IGTEITKIAG (197 aa)) is the CheB-type methylesterase domain. Active-site residues include serine 176, histidine 203, and aspartate 301.

This sequence belongs to the CheB family. In terms of processing, phosphorylated by CheA. Phosphorylation of the N-terminal regulatory domain activates the methylesterase activity.

It is found in the cytoplasm. It carries out the reaction [protein]-L-glutamate 5-O-methyl ester + H2O = L-glutamyl-[protein] + methanol + H(+). The enzyme catalyses L-glutaminyl-[protein] + H2O = L-glutamyl-[protein] + NH4(+). Its function is as follows. Involved in chemotaxis. Part of a chemotaxis signal transduction system that modulates chemotaxis in response to various stimuli. Catalyzes the demethylation of specific methylglutamate residues introduced into the chemoreceptors (methyl-accepting chemotaxis proteins or MCP) by CheR. Also mediates the irreversible deamidation of specific glutamine residues to glutamic acid. In Geobacter metallireducens (strain ATCC 53774 / DSM 7210 / GS-15), this protein is Protein-glutamate methylesterase/protein-glutamine glutaminase 5.